A 374-amino-acid chain; its full sequence is Alanine racemase (374 aa).

The active-site Proton acceptor; specific for D-alanine is Lys-34. The residue at position 34 (Lys-34) is an N6-(pyridoxal phosphate)lysine. Arg-147 is a binding site for substrate. The active-site Proton acceptor; specific for L-alanine is Tyr-271. Met-319 is a binding site for substrate.

It belongs to the alanine racemase family. Pyridoxal 5'-phosphate is required as a cofactor.

The enzyme catalyses L-alanine = D-alanine. It participates in amino-acid biosynthesis; D-alanine biosynthesis; D-alanine from L-alanine: step 1/1. Functionally, catalyzes the interconversion of L-alanine and D-alanine. May also act on other amino acids. The protein is Alanine racemase (alr) of Haemophilus ducreyi (strain 35000HP / ATCC 700724).